The chain runs to 203 residues: MAKAYDHLFKLLLIGDSGVGKTCLIIRFAEDNFNNTYISTIGIDFKIRTVEIEGKRIKLQVWDTAGQERFKTITTAYYRGAMGIILVYDITDEKSFENIQNWMKSIKENASAGVERLLLGNKCDMEAKRKVLKEQADKLAREHGIRFFETSAKSSMNVDEAFNSLARDILLKSGGRRSGNHSKPSSTDLKPSDKKNTNKCSLG.

7 residues coordinate GTP: Ser-17, Gly-18, Gly-20, Lys-21, Thr-22, Cys-23, and Thr-40. Thr-22 serves as a coordination point for Mg(2+). Residues 31–45 carry the Switch 1 motif; the sequence is DNFNNTYISTIGIDF. A Mg(2+)-binding site is contributed by Thr-40. Residues Lys-46 and Lys-58 each participate in a glycyl lysine isopeptide (Lys-Gly) (interchain with G-Cter in ubiquitin) cross-link. Asp-63 is a Mg(2+) binding site. The short motif at 63-80 is the Switch 2 element; that stretch reads DTAGQERFKTITTAYYRG. GTP-binding residues include Gly-66, Asn-121, Lys-122, Asp-124, Ala-152, and Lys-153. Residues 173 to 203 are disordered; that stretch reads SGGRRSGNHSKPSSTDLKPSDKKNTNKCSLG. Position 178 is a phosphoserine (Ser-178). Cysteine methyl ester is present on Cys-200. Cys-200 carries S-geranylgeranyl cysteine lipidation. Positions 201–203 are cleaved as a propeptide — removed in mature form; it reads SLG.

The protein belongs to the small GTPase superfamily. Rab family. In terms of assembly, interacts (GTP-bound form) with MICALL2; competes with RAB8A and is involved in tight junctions assembly. Interacts (GTP-bound form) with MICALL1. Interacts (GTP-bound form) with MICAL1, MICAL3, MICALCL, EHBP1 and EHBP1L1; ternary complexes of RAB8A, RAB13 and either MICAL1 or EHBP1L1 are possible. Interacts with PRKACA; downstream effector of RAB13 involved in tight junction assembly. Interacts with GRB2; may recruit RAB13 to the leading edge of migrating endothelial cells where it can activate RHOA. Interacts (isoprenylated form) with PDE6D; dissociates RAB13 from membranes. Interacts with BICDL2/BICDR2. Interacts with LEPROT and LEPROTL1. Requires Mg(2+) as cofactor. In terms of processing, ubiquitinated via 'Lys-11'-linked ubiquitination on Lys-46 and Lys-58; impairing the recruitment of guanosine diphosphate (GDP) dissociation inhibitor 1/GDI1.

The protein localises to the cell membrane. It is found in the cytoplasmic vesicle membrane. It localises to the cell junction. The protein resides in the tight junction. Its subcellular location is the golgi apparatus. The protein localises to the trans-Golgi network membrane. It is found in the recycling endosome membrane. It localises to the cell projection. The protein resides in the lamellipodium. It carries out the reaction GTP + H2O = GDP + phosphate + H(+). Its activity is regulated as follows. Regulated by guanine nucleotide exchange factors (GEFs) including DENND1C, which promote the exchange of bound GDP for free GTP. Regulated by GTPase activating proteins (GAPs) which increase the GTP hydrolysis activity. Inhibited by GDP dissociation inhibitors (GDIs). Activated in response to insulin. In terms of biological role, the small GTPases Rab are key regulators of intracellular membrane trafficking, from the formation of transport vesicles to their fusion with membranes. Rabs cycle between an inactive GDP-bound form and an active GTP-bound form that is able to recruit to membranes different sets of downstream effectors directly responsible for vesicle formation, movement, tethering and fusion. RAB13 is involved in endocytic recycling and regulates the transport to the plasma membrane of transmembrane proteins like the tight junction protein OCLN/occludin. Thereby, it regulates the assembly and the activity of tight junctions. Moreover, it may also regulate tight junction assembly by activating the PKA signaling pathway and by reorganizing the actin cytoskeleton through the activation of the downstream effectors PRKACA and MICALL2 respectively. Through its role in tight junction assembly, may play a role in the establishment of Sertoli cell barrier. Plays also a role in angiogenesis through regulation of endothelial cells chemotaxis. Also involved in neurite outgrowth. Has also been proposed to play a role in post-Golgi membrane trafficking from the TGN to the recycling endosome. Finally, it has been involved in insulin-induced transport to the plasma membrane of the glucose transporter GLUT4 and therefore may play a role in glucose homeostasis. The polypeptide is Ras-related protein Rab-13 (RAB13) (Mesocricetus auratus (Golden hamster)).